We begin with the raw amino-acid sequence, 325 residues long: Elongation factor P--(R)-beta-lysine ligase (325 aa).

76–78 (SPE) provides a ligand contact to substrate. ATP contacts are provided by residues 100–102 (RNE) and Asn-109. Tyr-118 serves as a coordination point for substrate. An ATP-binding site is contributed by 244–245 (EL). Glu-251 is a binding site for substrate. An ATP-binding site is contributed by Gly-300.

The protein belongs to the class-II aminoacyl-tRNA synthetase family. EpmA subfamily. In terms of assembly, homodimer.

The enzyme catalyses D-beta-lysine + L-lysyl-[protein] + ATP = N(6)-((3R)-3,6-diaminohexanoyl)-L-lysyl-[protein] + AMP + diphosphate + H(+). Functionally, with EpmB is involved in the beta-lysylation step of the post-translational modification of translation elongation factor P (EF-P). Catalyzes the ATP-dependent activation of (R)-beta-lysine produced by EpmB, forming a lysyl-adenylate, from which the beta-lysyl moiety is then transferred to the epsilon-amino group of a conserved specific lysine residue in EF-P. In Sodalis glossinidius (strain morsitans), this protein is Elongation factor P--(R)-beta-lysine ligase.